Consider the following 477-residue polypeptide: MARTLAEKVWDDHVVRKGQDGEPDLLYIDLHLVHEVTSPQAFDGLRAAGRPVRRLDLTIATEDHNTPTVDIDRPLSLLEDKTSAKQLQTLRENCAEFGVRLHPLGDAEQGIVHVVGPQLGLTQPGMTVVCGDSHTSTHGAFGSLGMGIGTSEVEHVLATQTLPLKPFKTMAITVDGTLKPGTTAKDVILAVIAEIGTGGGQGYVLEYRGEAIRNLSMEGRMTICNMSIEAGARAGMVAPDETTFAYLEGRPHAPQGADWDAAVEYWRTLRTDDDAEFDAEVVLDGSALEPFVTWGTNPGQGVPLSGSVPEPERIGDDGVRQGVERALEYMGLEGGTPMRDIAVDTVFIGSCTNSRIEDLRAAADVVRGRRKADSVRVMVVPGSAKVRLQAEAEGIDTVFKEFGADWRFAGCSMCLGMNPDQLAPGERCASTSNRNFEGRQGKGGRTHLVSPLVAAATAVRGTLSSPADLEPPVPTNV.

Positions 351, 411, and 414 each coordinate [4Fe-4S] cluster.

The protein belongs to the aconitase/IPM isomerase family. LeuC type 1 subfamily. In terms of assembly, heterodimer of LeuC and LeuD. Requires [4Fe-4S] cluster as cofactor.

It carries out the reaction (2R,3S)-3-isopropylmalate = (2S)-2-isopropylmalate. It participates in amino-acid biosynthesis; L-leucine biosynthesis; L-leucine from 3-methyl-2-oxobutanoate: step 2/4. Catalyzes the isomerization between 2-isopropylmalate and 3-isopropylmalate, via the formation of 2-isopropylmaleate. In Kineococcus radiotolerans (strain ATCC BAA-149 / DSM 14245 / SRS30216), this protein is 3-isopropylmalate dehydratase large subunit.